Here is a 239-residue protein sequence, read N- to C-terminus: Protein GrpE (239 aa).

Disordered regions lie at residues 1–53 (MIEE…EDLK) and 210–239 (GPGQ…SEEN). Composition is skewed to basic and acidic residues over residues 34–53 (NEDK…EDLK) and 219–230 (SEEKDKVDKDID).

This sequence belongs to the GrpE family. Homodimer.

It is found in the cytoplasm. Participates actively in the response to hyperosmotic and heat shock by preventing the aggregation of stress-denatured proteins, in association with DnaK and GrpE. It is the nucleotide exchange factor for DnaK and may function as a thermosensor. Unfolded proteins bind initially to DnaJ; upon interaction with the DnaJ-bound protein, DnaK hydrolyzes its bound ATP, resulting in the formation of a stable complex. GrpE releases ADP from DnaK; ATP binding to DnaK triggers the release of the substrate protein, thus completing the reaction cycle. Several rounds of ATP-dependent interactions between DnaJ, DnaK and GrpE are required for fully efficient folding. The chain is Protein GrpE from Prochlorococcus marinus (strain MIT 9515).